Reading from the N-terminus, the 91-residue chain is Small ribosomal subunit protein uS15 (91 aa).

It belongs to the universal ribosomal protein uS15 family. In terms of assembly, part of the 30S ribosomal subunit. Forms a bridge to the 50S subunit in the 70S ribosome, contacting the 23S rRNA.

In terms of biological role, one of the primary rRNA binding proteins, it binds directly to 16S rRNA where it helps nucleate assembly of the platform of the 30S subunit by binding and bridging several RNA helices of the 16S rRNA. Its function is as follows. Forms an intersubunit bridge (bridge B4) with the 23S rRNA of the 50S subunit in the ribosome. The protein is Small ribosomal subunit protein uS15 of Synechococcus sp. (strain JA-2-3B'a(2-13)) (Cyanobacteria bacterium Yellowstone B-Prime).